The chain runs to 425 residues: Multifunctional CCA protein (425 aa).

2 residues coordinate ATP: glycine 8 and arginine 11. Residues glycine 8 and arginine 11 each coordinate CTP. Positions 21 and 23 each coordinate Mg(2+). Residues arginine 91, arginine 141, and arginine 144 each contribute to the ATP site. Residues arginine 91, arginine 141, and arginine 144 each contribute to the CTP site. One can recognise an HD domain in the interval 230–331 (TGVHLMMVLD…VRLLERCDAI (102 aa)).

It belongs to the tRNA nucleotidyltransferase/poly(A) polymerase family. Bacterial CCA-adding enzyme type 1 subfamily. As to quaternary structure, monomer. Can also form homodimers and oligomers. It depends on Mg(2+) as a cofactor. Requires Ni(2+) as cofactor.

The enzyme catalyses a tRNA precursor + 2 CTP + ATP = a tRNA with a 3' CCA end + 3 diphosphate. It catalyses the reaction a tRNA with a 3' CCA end + 2 CTP + ATP = a tRNA with a 3' CCACCA end + 3 diphosphate. Its function is as follows. Catalyzes the addition and repair of the essential 3'-terminal CCA sequence in tRNAs without using a nucleic acid template. Adds these three nucleotides in the order of C, C, and A to the tRNA nucleotide-73, using CTP and ATP as substrates and producing inorganic pyrophosphate. tRNA 3'-terminal CCA addition is required both for tRNA processing and repair. Also involved in tRNA surveillance by mediating tandem CCA addition to generate a CCACCA at the 3' terminus of unstable tRNAs. While stable tRNAs receive only 3'-terminal CCA, unstable tRNAs are marked with CCACCA and rapidly degraded. In Acidovorax sp. (strain JS42), this protein is Multifunctional CCA protein.